An 85-amino-acid chain; its full sequence is Conotoxin Lt28.3 (85 aa).

A signal peptide spans 1–21; the sequence is MPKLEMMLLVLLILPLCYIDA. A propeptide spanning residues 22 to 40 is cleaved from the precursor; that stretch reads VGPLPPWNMEDEIIEHWQK.

It belongs to the conotoxin D superfamily. Post-translationally, contains 5 disulfide bonds. Expressed by the venom duct.

The protein resides in the secreted. Its function is as follows. Probable neurotoxin. The polypeptide is Conotoxin Lt28.3 (Conus litteratus (Lettered cone)).